The following is a 241-amino-acid chain: Orotidine 5'-phosphate decarboxylase (241 aa).

Substrate is bound by residues Asp-15, Lys-37, 64–73 (DLKYHDIPNT), Thr-126, Arg-187, Gln-196, Gly-216, and Arg-217. The Proton donor role is filled by Lys-66.

This sequence belongs to the OMP decarboxylase family. Type 1 subfamily. As to quaternary structure, homodimer.

The enzyme catalyses orotidine 5'-phosphate + H(+) = UMP + CO2. It functions in the pathway pyrimidine metabolism; UMP biosynthesis via de novo pathway; UMP from orotate: step 2/2. In terms of biological role, catalyzes the decarboxylation of orotidine 5'-monophosphate (OMP) to uridine 5'-monophosphate (UMP). The polypeptide is Orotidine 5'-phosphate decarboxylase (Geotalea uraniireducens (strain Rf4) (Geobacter uraniireducens)).